A 470-amino-acid chain; its full sequence is Argininosuccinate lyase (470 aa).

This sequence belongs to the lyase 1 family. Argininosuccinate lyase subfamily.

The protein localises to the cytoplasm. The catalysed reaction is 2-(N(omega)-L-arginino)succinate = fumarate + L-arginine. It participates in amino-acid biosynthesis; L-arginine biosynthesis; L-arginine from L-ornithine and carbamoyl phosphate: step 3/3. This Bordetella avium (strain 197N) protein is Argininosuccinate lyase.